A 349-amino-acid chain; its full sequence is Anaerobic nitrite reductase Glb1-3 (349 aa).

Globin domains follow at residues 13–162 (GFTE…AEMK) and 184–333 (CFTE…AEMK). Residues serine 56, lysine 70, histidine 74, lysine 104, threonine 108, histidine 109, serine 227, lysine 241, histidine 245, lysine 275, threonine 279, and histidine 280 each contribute to the heme b site.

Belongs to the plant globin family. As to quaternary structure, monomer. It depends on heme b as a cofactor.

The protein resides in the cytoplasm. Its subcellular location is the nucleus. It catalyses the reaction Fe(III)-heme b-[protein] + nitric oxide + H2O = Fe(II)-heme b-[protein] + nitrite + 2 H(+). In terms of biological role, phytoglobin that regulates the fine tuning of nitric oxide (NO) concentration in the cytosol in response to sudden changes in O(2) availability, and performs both symbiotic and nonsymbiotic functions. Exhibits NO dioxygenase activity in the presence of O(2) but nitrite reductase (NiR) activity in the absence of O(2) (e.g. during flooding or in waterlogged soil). May not function as an oxygen storage or transport protein. Extremely reactive toward the physiological ligands O(2), nitric oxide (NO), and nitrite with a very high affinity for O(2) through an hexacoordinate heme iron because of a very low dissociation constant. In Medicago truncatula (Barrel medic), this protein is Anaerobic nitrite reductase Glb1-3.